A 467-amino-acid polypeptide reads, in one-letter code: Protein CitXG (467 aa).

Positions 1–178 (MDYFEGGERL…NKMLHNFEKS (178 aa)) are apo-citrate lyase phosphoribosyl-dephospho-CoA transferase. Residues 179–467 (KMIVPQMTQS…IFLARLVGSL (289 aa)) form a 2-(5''-triphosphoribosyl)-3'-dephosphocoenzyme-A synthase region.

This sequence in the N-terminal section; belongs to the CitX family. The protein in the C-terminal section; belongs to the CitG/MdcB family.

It carries out the reaction apo-[citrate lyase ACP] + 2'-(5''-triphospho-alpha-D-ribosyl)-3'-dephospho-CoA = holo-[citrate lyase ACP] + diphosphate. The catalysed reaction is 3'-dephospho-CoA + ATP = 2'-(5''-triphospho-alpha-D-ribosyl)-3'-dephospho-CoA + adenine. Its function is as follows. Bifunctional enzyme that catalyzes formation of 2-(5''-triphosphoribosyl)-3'-dephosphocoenzyme-A, and then the transfer of this prosthetic group precursor to the apo-acyl carrier protein (gamma chain) of the citrate lyase to yield the holo-acyl carrier protein. The protein is Protein CitXG (citXG) of Leuconostoc mesenteroides subsp. cremoris.